Reading from the N-terminus, the 308-residue chain is Ornithine carbamoyltransferase (308 aa).

Carbamoyl phosphate contacts are provided by residues 50 to 53 (STRT), Gln77, Arg101, and 128 to 131 (HPCQ). L-ornithine contacts are provided by residues Asn160, Asp224, and 228 to 229 (SM). Residues 264–265 (CL) and Arg292 each bind carbamoyl phosphate.

The protein belongs to the aspartate/ornithine carbamoyltransferase superfamily. OTCase family.

Its subcellular location is the cytoplasm. It carries out the reaction carbamoyl phosphate + L-ornithine = L-citrulline + phosphate + H(+). It functions in the pathway amino-acid biosynthesis; L-arginine biosynthesis; L-arginine from L-ornithine and carbamoyl phosphate: step 1/3. Reversibly catalyzes the transfer of the carbamoyl group from carbamoyl phosphate (CP) to the N(epsilon) atom of ornithine (ORN) to produce L-citrulline. This is Ornithine carbamoyltransferase from Mycobacterium ulcerans (strain Agy99).